The following is a 1185-amino-acid chain: Chromosome partition protein Smc (1185 aa).

Residue 34 to 41 (PNGSGKSN) participates in ATP binding. 2 coiled-coil regions span residues 174–376 (WRRS…EKDI) and 412–526 (ENIV…KLDV). Residues 534 to 644 (VGEIISLQKK…CENIDNAFEI (111 aa)) enclose the SMC hinge domain. Residues 679 to 1039 (NIIGRKREIE…IDAMTEKMKG (361 aa)) are a coiled coil.

Belongs to the SMC family. Homodimer.

Its subcellular location is the cytoplasm. In terms of biological role, required for chromosome condensation and partitioning. The chain is Chromosome partition protein Smc from Clostridium kluyveri (strain NBRC 12016).